Consider the following 180-residue polypeptide: Centromere protein M (180 aa).

Component of the CENPA-NAC complex, at least composed of CENPA, CENPC, CENPH, CENPM, CENPN, CENPT and CENPU. The CENPA-NAC complex interacts with the CENPA-CAD complex, composed of CENPI, CENPK, CENPL, CENPO, CENPP, CENPQ, CENPR and CENPS. Isoform 3 is highly expressed in spleen, and intermediately in heart, prostate and ovary. Isoform 3 is highly expressed in resting CD19 B-cells and B-lineage chronic lymphocytic leukemia (B-CLL) cells and weakly expressed in activated B-cells. Isoform 1 is selectively expressed in activated CD19 cells and weakly in resting CD19 B-cells.

It localises to the nucleus. Its subcellular location is the cytoplasm. It is found in the chromosome. The protein resides in the centromere. The protein localises to the kinetochore. Its function is as follows. Component of the CENPA-NAC (nucleosome-associated) complex, a complex that plays a central role in assembly of kinetochore proteins, mitotic progression and chromosome segregation. The CENPA-NAC complex recruits the CENPA-CAD (nucleosome distal) complex and may be involved in incorporation of newly synthesized CENPA into centromeres. The sequence is that of Centromere protein M (CENPM) from Homo sapiens (Human).